The chain runs to 241 residues: Probable transcriptional regulatory protein stu0195 (241 aa).

The protein belongs to the TACO1 family. YeeN subfamily.

The protein resides in the cytoplasm. The polypeptide is Probable transcriptional regulatory protein stu0195 (Streptococcus thermophilus (strain ATCC BAA-250 / LMG 18311)).